We begin with the raw amino-acid sequence, 238 residues long: Transcriptional activator protein AnoR (238 aa).

An HTH luxR-type domain is found at 170–236 (EFSQFNLYLT…SAAIRAVMLG (67 aa)). The segment at residues 195 to 214 (SAEIAQIIGVTERTVNFHLC) is a DNA-binding region (H-T-H motif).

It belongs to the autoinducer-regulated transcriptional regulatory protein family.

Positively regulates the expression of anoI. Required for biofilm formation and motility. Probably part of a quorum-sensing system with AnoI. The polypeptide is Transcriptional activator protein AnoR (Acinetobacter nosocomialis).